Here is a 530-residue protein sequence, read N- to C-terminus: Rho GTPase-activating protein 36 (530 aa).

A signal peptide spans 1 to 19 (MPPLLLLSALIFLVNVLGG). A Rho-GAP domain is found at 209–409 (MSLNPIAKQI…AMIDNWDVLF (201 aa)). Residues 471 to 512 (GQSKPFDEGSSEEPAVPPGTARSHDDEEGAGNPLILEQDRPL) form a disordered region.

In terms of assembly, may interacts (via the Rho-GAP domain) with the active form of RAC1.

GTPase activator for the Rho-type GTPases by converting them to an inactive GDP-bound state. The polypeptide is Rho GTPase-activating protein 36 (ARHGAP36) (Bos taurus (Bovine)).